The primary structure comprises 919 residues: Phosphoenolpyruvate carboxylase (919 aa).

Residues His138 and Lys579 contribute to the active site.

Belongs to the PEPCase type 1 family. Mg(2+) is required as a cofactor.

It catalyses the reaction oxaloacetate + phosphate = phosphoenolpyruvate + hydrogencarbonate. In terms of biological role, forms oxaloacetate, a four-carbon dicarboxylic acid source for the tricarboxylic acid cycle. In Corynebacterium glutamicum (Brevibacterium saccharolyticum), this protein is Phosphoenolpyruvate carboxylase.